The chain runs to 607 residues: Fatty acid amide hydrolase (607 aa).

Active-site charge relay system residues include lysine 204 and serine 280. Position 301–304 (301–304 (GGGS)) interacts with substrate. The active-site Acyl-ester intermediate is the serine 304.

It belongs to the amidase family. As to quaternary structure, forms homodimers.

The protein localises to the endoplasmic reticulum membrane. The protein resides in the cell membrane. The enzyme catalyses N-(9Z,12Z-octadecadienoyl)-ethanolamine + H2O = ethanolamine + (9Z,12Z)-octadecadienoate. Functionally, catalyzes the hydrolysis of bioactive endogenous fatty acid amides to their corresponding acids. The hydrolysis of endogenous amidated lipids terminates their participation as lipid mediators in various signaling systems. Converts a wide range of N-acylethanolamines (NAEs) to their corresponding free fatty acids and ethanolamine. The sequence is that of Fatty acid amide hydrolase from Medicago truncatula (Barrel medic).